Reading from the N-terminus, the 146-residue chain is Minor capsid protein P5 (146 aa).

Interacts with the major capsid protein.

The protein localises to the virion. In terms of biological role, one of the minor capsid proteins that constitute a network internal to the major capsid proteins and outside the lipid membrane. The minor capsid proteins glue and stabilize the capsomers. The sequence is that of Minor capsid protein P5 from Paramecium bursaria Chlorella virus 1 (PBCV-1).